Consider the following 157-residue polypeptide: Small ribosomal subunit protein uS9 (157 aa).

It belongs to the universal ribosomal protein uS9 family.

In Caulobacter sp. (strain K31), this protein is Small ribosomal subunit protein uS9.